The primary structure comprises 423 residues: Adenylosuccinate synthetase (423 aa).

GTP-binding positions include 13-19 (GDEGKGK) and 41-43 (GHT). The active-site Proton acceptor is the D14. Residues D14 and G41 each contribute to the Mg(2+) site. IMP contacts are provided by residues 14 to 17 (DEGK), 39 to 42 (NAGH), T130, R144, Q223, T238, and R302. The Proton donor role is filled by H42. 298–304 (SVTGRKR) lines the substrate pocket. GTP-binding positions include R304 and 410–412 (SVG).

This sequence belongs to the adenylosuccinate synthetase family. As to quaternary structure, homodimer. Mg(2+) serves as cofactor.

It is found in the cytoplasm. The enzyme catalyses IMP + L-aspartate + GTP = N(6)-(1,2-dicarboxyethyl)-AMP + GDP + phosphate + 2 H(+). It participates in purine metabolism; AMP biosynthesis via de novo pathway; AMP from IMP: step 1/2. Plays an important role in the de novo pathway of purine nucleotide biosynthesis. Catalyzes the first committed step in the biosynthesis of AMP from IMP. This Porphyromonas gingivalis (strain ATCC BAA-308 / W83) protein is Adenylosuccinate synthetase.